The primary structure comprises 331 residues: 6-phosphogluconolactonase (331 aa).

Lysine 287 carries the N6-acetyllysine modification.

It belongs to the cycloisomerase 2 family.

It carries out the reaction 6-phospho-D-glucono-1,5-lactone + H2O = 6-phospho-D-gluconate + H(+). It functions in the pathway carbohydrate degradation; pentose phosphate pathway; D-ribulose 5-phosphate from D-glucose 6-phosphate (oxidative stage): step 2/3. Catalyzes the hydrolysis of 6-phosphogluconolactone to 6-phosphogluconate. This is 6-phosphogluconolactonase from Escherichia coli (strain SMS-3-5 / SECEC).